The chain runs to 1311 residues: Suppressor of presenilin protein 4 (1311 aa).

The span at 1–11 (MSSEPTSSIES) shows a compositional bias: polar residues. Disordered regions lie at residues 1–58 (MSSE…DDLN) and 75–95 (MFED…STAH). 2 C2H2-type zinc fingers span residues 112–134 (HACH…TKMH) and 141–163 (FACE…NNIH). The disordered stretch occupies residues 226–304 (EFDTTPPPIL…PPPVRKDVEK (79 aa)). Over residues 280-293 (SPKGSLPSSSASSV) the composition is skewed to low complexity. 4 consecutive C2H2-type zinc fingers follow at residues 327 to 349 (QRCP…SGGH), 355 to 379 (YICP…YILH), 451 to 476 (KKCN…VKTH), and 487 to 510 (FLCL…LIEH). Positions 544–563 (VKEEPKEADGDESGDESFDS) are disordered. The span at 552-561 (DGDESGDESF) shows a compositional bias: acidic residues. C2H2-type zinc fingers lie at residues 585-607 (FCCN…YDKH), 613-635 (FKCQ…EKLH), 709-731 (FQCT…KKRH), 737-759 (YRCV…LKQH), 794-816 (YCCD…HRNH), and 823-845 (NICS…TIIH). Positions 865–1002 (RPVSSLTDLN…ESPEPDESVE (138 aa)) are disordered. Over residues 874-897 (NSEKMNERKSTKRKMLDKVEKMEV) the composition is skewed to basic and acidic residues. The span at 898 to 907 (GEDEEDDEES) shows a compositional bias: acidic residues. Residues 908–920 (VDKGTDDGDYKQR) show a composition bias toward basic and acidic residues. The segment covering 956–979 (NRINYSLLSKNGSGKPTPSTSSAN) has biased composition (polar residues). 6 consecutive C2H2-type zinc fingers follow at residues 1022–1044 (LKCP…RYYH), 1053–1075 (YACS…LKLH), 1104–1126 (YYCK…SAYH), 1162–1184 (KYCK…LDRH), 1190–1212 (YKCY…QLNH), and 1261–1284 (LKCP…SVHH).

As to expression, expressed in neurons.

It localises to the nucleus. Probable transcriptional regulator, which participates in the transcriptional repression of the presenilin protein hop-1. Might play a role in the oxidative stress response. The chain is Suppressor of presenilin protein 4 (spr-4) from Caenorhabditis elegans.